Here is a 1179-residue protein sequence, read N- to C-terminus: ATP-dependent helicase/deoxyribonuclease subunit B (1179 aa).

This sequence belongs to the helicase family. AddB/RexB type 2 subfamily. In terms of assembly, heterodimer of AddA and RexB. Mg(2+) serves as cofactor.

The heterodimer acts as both an ATP-dependent DNA helicase and an ATP-dependent, dual-direction single-stranded exonuclease. Recognizes the chi site generating a DNA molecule suitable for the initiation of homologous recombination. This subunit has 5' -&gt; 3' nuclease activity but not helicase activity. This is ATP-dependent helicase/deoxyribonuclease subunit B from Lacticaseibacillus paracasei (strain ATCC 334 / BCRC 17002 / CCUG 31169 / CIP 107868 / KCTC 3260 / NRRL B-441) (Lactobacillus paracasei).